The primary structure comprises 528 residues: MAKKILYQDNARRALERGMEIMVEAVSVTLGPKGRNVVLEKPYGSPQIVNDGVTIAKEINLEDHIENTGVALIRQAASKTNDVAGDGTTTATVLAYAMVKEGLKNVTAGANPISIKLGMEKATQYLVTQINEFAQPVEDIQSIEQVASISAGNDNLIGSLIADALSKVGKEGVISLEEGKGIITELEITEGMKLEKGFISPYFITNTEKMEVSYENPFILLTDKRITLVQQDLLPILEQITKTKRPLLLIAEDVEKEALATLILNKLRGIVNVVAVRAPGFGELRKQMLEDIAVLTGGTVITQDAGLSLENIQVNLLGQARRIIVNKDSTTIVGDGLEIEQIKARCEQLRKQVNIADTGYEKEKLQDRIAKLSGGIAVIRVGAVTETEMKDKKLRLEDAINATRAAVEEGIVPGGGATLAHLAENLLTWAKINLKEDELIGAMIISRAIVAPLKRIAENAGINGPVIIEKVQQQEFEIGYNAAKNVFGNMYDEGIVDPAKVTRSGLQNATSIASMILTTECIIVDETD.

Residues 29 to 32 (TLGP), 86 to 90 (DGTTT), glycine 415, 481 to 483 (NAA), and aspartate 497 each bind ATP.

Belongs to the chaperonin (HSP60) family. As to quaternary structure, forms a cylinder of 14 subunits composed of two heptameric rings stacked back-to-back. Interacts with the co-chaperonin GroES.

Its subcellular location is the plastid. The protein resides in the chloroplast. The enzyme catalyses ATP + H2O + a folded polypeptide = ADP + phosphate + an unfolded polypeptide.. Together with its co-chaperonin GroES, plays an essential role in assisting protein folding. The GroEL-GroES system forms a nano-cage that allows encapsulation of the non-native substrate proteins and provides a physical environment optimized to promote and accelerate protein folding. The chain is Chaperonin GroEL, chloroplastic from Trieres chinensis (Marine centric diatom).